Reading from the N-terminus, the 381-residue chain is MESIGIVAPQKMHFTEPLPLQNGSSLAGYDLMVETYGTLNAARSNAVLVCHALNASHHVAGVYADNPRDIGWWDNMVGPGKPLDTDKFFVIGVNNLGSCFGSTGPMSIDPSTGNPYGATFPVVTVEDWVNAQARVADQFGITRFAAVMGGSLGGMQALAWSMMYPERVAHCIVVASTPKLSAQNIAFNEVARSAILSDPDFHGGNYYAHNVKPKRGLRVARMIGHITYLSDDDMAEKFGRSLRRAEGALDAYNFNFDVEFEVESYLRYQGDKFADYFDANTYLLITRALDYFDPAKAFAGDLTAAVAHTTAKYLIASFTTDWRFAPARSRELVKALLDHKRTVTYAEIDAPHGHDAFLLDDARYHNLMRAYYERIANEVNA.

Positions 45–360 (NAVLVCHALN…PHGHDAFLLD (316 aa)) constitute an AB hydrolase-1 domain. Catalysis depends on S151, which acts as the Nucleophile. R221 contributes to the substrate binding site. Active-site residues include D321 and H354. A substrate-binding site is contributed by D355.

The protein belongs to the AB hydrolase superfamily. MetX family. In terms of assembly, homodimer.

It is found in the cytoplasm. It catalyses the reaction L-homoserine + succinyl-CoA = O-succinyl-L-homoserine + CoA. Its pathway is amino-acid biosynthesis; L-methionine biosynthesis via de novo pathway; O-succinyl-L-homoserine from L-homoserine: step 1/1. Functionally, transfers a succinyl group from succinyl-CoA to L-homoserine, forming succinyl-L-homoserine. In Paraburkholderia xenovorans (strain LB400), this protein is Homoserine O-succinyltransferase.